The following is a 226-amino-acid chain: Gap junction beta-2 protein (226 aa).

The stretch at 2-13 (DWGALQTILGGV) is an intramembrane region. Residues 14-20 (NKHSTSI) are Cytoplasmic-facing. The helical transmembrane segment at 21–40 (GKIWLTVLFIFRIMILVVAA) threads the bilayer. Residues 41–73 (KEVWGDEQADFVCNTLQPGCKNVCYDHYFPISH) are Extracellular-facing. Glutamate 42, glycine 45, and glutamate 47 together coordinate Ca(2+). 3 disulfide bridges follow: cysteine 53-cysteine 180, cysteine 60-cysteine 174, and cysteine 64-cysteine 169. The helical transmembrane segment at 74–94 (IRLWALQLIFVSTPALLVAMH) threads the bilayer. Residues 95–135 (VAYRRHEKKRKFIKGEIKSEFKDIEEIKTQKVRIEGSLWWT) lie on the Cytoplasmic side of the membrane. A helical transmembrane segment spans residues 136–156 (YTSSIFFRVIFEAAFMYVFYV). The Extracellular portion of the chain corresponds to 157-189 (MYDGFSMQRLVKCNAWPCPNTVDCFVSRPTEKT). Residues 190–210 (VFTVFMIAVSGICILLNVTEL) form a helical membrane-spanning segment. Residues 211 to 226 (CYLLIRYCSGRSKKPV) lie on the Cytoplasmic side of the membrane.

This sequence belongs to the connexin family. Beta-type (group I) subfamily. In terms of assembly, a hemichannel or connexon is composed of a hexamer of connexins. A functional gap junction is formed by the apposition of two hemichannels. Forms heteromeric channels with GJB4. Interacts with CNST.

Its subcellular location is the cell membrane. The protein resides in the cell junction. It localises to the gap junction. Structural component of gap junctions. Gap junctions are dodecameric channels that connect the cytoplasm of adjoining cells. They are formed by the docking of two hexameric hemichannels, one from each cell membrane. Small molecules and ions diffuse from one cell to a neighboring cell via the central pore. This Pongo pygmaeus (Bornean orangutan) protein is Gap junction beta-2 protein (GJB2).